The sequence spans 243 residues: Glucosamine-6-phosphate deaminase (243 aa).

Asp67 serves as the catalytic Proton acceptor; for enolization step. Asn137 functions as the For ring-opening step in the catalytic mechanism. The active-site Proton acceptor; for ring-opening step is His139. Catalysis depends on Glu144, which acts as the For ring-opening step.

The protein belongs to the glucosamine/galactosamine-6-phosphate isomerase family. NagB subfamily.

It catalyses the reaction alpha-D-glucosamine 6-phosphate + H2O = beta-D-fructose 6-phosphate + NH4(+). It functions in the pathway amino-sugar metabolism; N-acetylneuraminate degradation; D-fructose 6-phosphate from N-acetylneuraminate: step 5/5. Its function is as follows. Catalyzes the reversible isomerization-deamination of glucosamine 6-phosphate (GlcN6P) to form fructose 6-phosphate (Fru6P) and ammonium ion. The protein is Glucosamine-6-phosphate deaminase of Staphylococcus epidermidis (strain ATCC 12228 / FDA PCI 1200).